The sequence spans 160 residues: Putative pre-16S rRNA nuclease (160 aa).

The protein belongs to the YqgF nuclease family.

Its subcellular location is the cytoplasm. In terms of biological role, could be a nuclease involved in processing of the 5'-end of pre-16S rRNA. This is Putative pre-16S rRNA nuclease from Chelativorans sp. (strain BNC1).